A 284-amino-acid polypeptide reads, in one-letter code: Pseudouridine-5'-phosphate glycosidase (284 aa).

E8 acts as the Proton donor in catalysis. Substrate is bound by residues K69 and V89. D119 is a binding site for Mn(2+). S121 to D123 is a binding site for substrate. K140 functions as the Nucleophile in the catalytic mechanism.

This sequence belongs to the pseudouridine-5'-phosphate glycosidase family. As to quaternary structure, homotrimer. Requires Mn(2+) as cofactor.

The enzyme catalyses D-ribose 5-phosphate + uracil = psi-UMP + H2O. Catalyzes the reversible cleavage of pseudouridine 5'-phosphate (PsiMP) to ribose 5-phosphate and uracil. Functions biologically in the cleavage direction, as part of a pseudouridine degradation pathway. The polypeptide is Pseudouridine-5'-phosphate glycosidase (Pseudothermotoga lettingae (strain ATCC BAA-301 / DSM 14385 / NBRC 107922 / TMO) (Thermotoga lettingae)).